The chain runs to 560 residues: DNA ligase B (560 aa).

Lysine 124 acts as the N6-AMP-lysine intermediate in catalysis.

It belongs to the NAD-dependent DNA ligase family. LigB subfamily.

The enzyme catalyses NAD(+) + (deoxyribonucleotide)n-3'-hydroxyl + 5'-phospho-(deoxyribonucleotide)m = (deoxyribonucleotide)n+m + AMP + beta-nicotinamide D-nucleotide.. Functionally, catalyzes the formation of phosphodiester linkages between 5'-phosphoryl and 3'-hydroxyl groups in double-stranded DNA using NAD as a coenzyme and as the energy source for the reaction. The chain is DNA ligase B from Escherichia coli O17:K52:H18 (strain UMN026 / ExPEC).